Consider the following 152-residue polypeptide: Ribosome maturation factor RimP (152 aa).

It belongs to the RimP family.

The protein localises to the cytoplasm. In terms of biological role, required for maturation of 30S ribosomal subunits. This is Ribosome maturation factor RimP from Rubrobacter xylanophilus (strain DSM 9941 / JCM 11954 / NBRC 16129 / PRD-1).